The sequence spans 137 residues: MVSFRTMWSLVVVVVVVAASLGSSGVHGRSVEGSSRMERLLSSGSSSSEPLSFLSQDQSVNKRQVFDQACKGIYDRAIFKKLDRVCEDCYNLYRKPYVATTCRQNCYANSVFRQCLDDLLLIDVVDEYISGVQTVGK.

The first 28 residues, 1–28 (MVSFRTMWSLVVVVVVVAASLGSSGVHG), serve as a signal peptide directing secretion. Position 64 is a pyrrolidone carboxylic acid (Gln-64). At Phe-66 the chain carries D-phenylalanine; in form CHH-II. 3 disulfide bridges follow: Cys-70–Cys-106, Cys-86–Cys-102, and Cys-89–Cys-115. Val-135 bears the Valine amide mark.

This sequence belongs to the arthropod CHH/MIH/GIH/VIH hormone family. In terms of tissue distribution, produced by the medulla terminalis X-organ in the eyestalks and transported to the sinus gland where they are stored and released.

Its subcellular location is the secreted. Functionally, hormone found in the sinus gland of isopods and decapods which controls the blood sugar level. Has a secretagogue action over the amylase released from the midgut gland. May act as a stress hormone and may be involved in the control of molting and reproduction. In Procambarus clarkii (Red swamp crayfish), this protein is Crustacean hyperglycemic hormones.